A 388-amino-acid chain; its full sequence is Dual-specificity RNA methyltransferase RlmN (388 aa).

Residue Glu109 is the Proton acceptor of the active site. The Radical SAM core domain occupies 115–354 (EDDRATLCVS…TIVRKTRGDD (240 aa)). Cys122 and Cys359 are disulfide-bonded. [4Fe-4S] cluster contacts are provided by Cys129, Cys133, and Cys136. S-adenosyl-L-methionine is bound by residues 183 to 184 (GE), Ser215, 237 to 239 (SLH), and Asn316. Cys359 acts as the S-methylcysteine intermediate in catalysis.

It belongs to the radical SAM superfamily. RlmN family. [4Fe-4S] cluster serves as cofactor.

Its subcellular location is the cytoplasm. It catalyses the reaction adenosine(2503) in 23S rRNA + 2 reduced [2Fe-2S]-[ferredoxin] + 2 S-adenosyl-L-methionine = 2-methyladenosine(2503) in 23S rRNA + 5'-deoxyadenosine + L-methionine + 2 oxidized [2Fe-2S]-[ferredoxin] + S-adenosyl-L-homocysteine. It carries out the reaction adenosine(37) in tRNA + 2 reduced [2Fe-2S]-[ferredoxin] + 2 S-adenosyl-L-methionine = 2-methyladenosine(37) in tRNA + 5'-deoxyadenosine + L-methionine + 2 oxidized [2Fe-2S]-[ferredoxin] + S-adenosyl-L-homocysteine. In terms of biological role, specifically methylates position 2 of adenine 2503 in 23S rRNA and position 2 of adenine 37 in tRNAs. m2A2503 modification seems to play a crucial role in the proofreading step occurring at the peptidyl transferase center and thus would serve to optimize ribosomal fidelity. The sequence is that of Dual-specificity RNA methyltransferase RlmN from Citrobacter koseri (strain ATCC BAA-895 / CDC 4225-83 / SGSC4696).